A 378-amino-acid chain; its full sequence is CST complex subunit STN1 (378 aa).

Residues 8 to 195 form an interaction with CTC1 region; that stretch reads MECESSPREE…KVYDQPFRNP (188 aa). A DNA-binding region (OB) is located at residues 64–165; that stretch reads VDIMGAVISV…EICANIYYKV (102 aa). Winged helix-turn-helix (wHTH) stretches follow at residues 201–305 and 306–378; these read EALN…YVTT and KDKD…YAAF.

The protein belongs to the STN1 family. Component of the CST complex, composed of TEN1/C17orf106, CTC1/C17orf68 and STN1; in the complex interacts directly with TEN1 and CTC1. Interacts with ACD/TPP1. Interacts with POT1 and POLA1.

It localises to the nucleus. The protein resides in the chromosome. The protein localises to the telomere. Component of the CST complex proposed to act as a specialized replication factor promoting DNA replication under conditions of replication stress or natural replication barriers such as the telomere duplex. The CST complex binds single-stranded DNA with high affinity in a sequence-independent manner, while isolated subunits bind DNA with low affinity by themselves. Initially the CST complex has been proposed to protect telomeres from DNA degradation. However, the CST complex has been shown to be involved in several aspects of telomere replication. The CST complex inhibits telomerase and is involved in telomere length homeostasis; it is proposed to bind to newly telomerase-synthesized 3' overhangs and to terminate telomerase action implicating the association with the ACD:POT1 complex thus interfering with its telomerase stimulation activity. The CST complex is also proposed to be involved in fill-in synthesis of the telomeric C-strand probably implicating recruitment and activation of DNA polymerase alpha. The CST complex facilitates recovery from many forms of exogenous DNA damage; seems to be involved in the re-initiation of DNA replication at repaired forks and/or dormant origins. Required for efficicient replication of the duplex region of the telomere. Promotes efficient replication of lagging-strand telomeres. Promotes general replication start following replication-fork stalling implicating new origin firing. May be in involved in C-strand fill-in during late S/G2 phase independent of its role in telomere duplex replication. This chain is CST complex subunit STN1, found in Mus musculus (Mouse).